A 485-amino-acid polypeptide reads, in one-letter code: Transcription factor E2FA (485 aa).

Positions 1-11 (MSGVVRSSPGS) are enriched in low complexity. 2 disordered regions span residues 1 to 69 (MSGV…SNNN) and 114 to 159 (SGFT…SPIT). Residues 12–26 (SQPPPPPPHHPPSSP) show a composition bias toward pro residues. Residues 114 to 125 (SGFTNIPSSPCQ) are compositionally biased toward polar residues. Basic residues predominate over residues 129–141 (KGGRVNIKSKAKG). The segment covering 142–159 (NKSTPQTPISTNAGSPIT) has biased composition (polar residues). A DNA-binding region spans residues 167–232 (RYDSSLGLLT…PFKNRILWKG (66 aa)). Residues 245-286 (SVLQLQAEIENLALEEQALDNQIRQTEERLRDLSENEKNQKW) are a coiled coil. Positions 249 to 277 (LQAEIENLALEEQALDNQIRQTEERLRDL) are leucine-zipper. Residues 435-450 (DYWLLSNAEISMTDIW) are retinoblastoma protein binding.

Belongs to the E2F/DP family. Heterodimer with DP proteins. Interacts (via dimerization domain) preferentially with DPA, but also with DPB. Interacts with maize retinoblastoma-related protein RBR1. No interaction with E2FD. As to expression, highly expressed in the shoot apical meristem, emerging leaf primordia, and vascular tissues of young leaf primordia. Expressed in flowers, in epidermis and cortex of hypocotyls, and at lower levels in leaves.

Its subcellular location is the cytoplasm. The protein resides in the nucleus. Its function is as follows. Transcription activator that binds DNA cooperatively with DP proteins through the E2 recognition site, 5'-TTTC[CG]CGC-3' found in the promoter region of a number of genes whose products are involved in cell cycle regulation or in DNA replication. The binding of retinoblastoma-related proteins represses transactivation. Regulates gene expression both positively and negatively. Activates the expression of E2FB. Involved in the control of cell-cycle progression from G1 to S phase. Stimulates cell proliferation and delays differentiation. The chain is Transcription factor E2FA (E2FA) from Arabidopsis thaliana (Mouse-ear cress).